A 528-amino-acid chain; its full sequence is Glucose-6-phosphate isomerase (528 aa).

Catalysis depends on E322, which acts as the Proton donor. Active-site residues include H351 and K455.

It belongs to the GPI family.

It is found in the cytoplasm. The catalysed reaction is alpha-D-glucose 6-phosphate = beta-D-fructose 6-phosphate. It functions in the pathway carbohydrate biosynthesis; gluconeogenesis. Its pathway is carbohydrate degradation; glycolysis; D-glyceraldehyde 3-phosphate and glycerone phosphate from D-glucose: step 2/4. Its function is as follows. Catalyzes the reversible isomerization of glucose-6-phosphate to fructose-6-phosphate. This Nostoc punctiforme (strain ATCC 29133 / PCC 73102) protein is Glucose-6-phosphate isomerase.